The chain runs to 308 residues: Isoaspartyl peptidase/L-asparaginase (308 aa).

At Met1 the chain carries N-acetylmethionine. Catalysis depends on Thr168, which acts as the Nucleophile. Substrate contacts are provided by residues 196 to 199 and 219 to 222; these read RVGD and TGHG.

The protein belongs to the Ntn-hydrolase family. As to quaternary structure, heterodimer of an alpha and beta chain produced by autocleavage. This heterodimer may then dimerize in turn, giving rise to a heterotetramer. Cleaved into an alpha and beta chain by autocatalysis; this activates the enzyme. The N-terminal residue of the beta subunit is responsible for the nucleophile hydrolase activity.

Its subcellular location is the cytoplasm. The enzyme catalyses L-asparagine + H2O = L-aspartate + NH4(+). It carries out the reaction Cleavage of a beta-linked Asp residue from the N-terminus of a polypeptide.. Functionally, has both L-asparaginase and beta-aspartyl peptidase activity. May be involved in the production of L-aspartate, which can act as an excitatory neurotransmitter in some brain regions. Is highly active with L-Asp beta-methyl ester. Besides, has catalytic activity toward beta-aspartyl dipeptides and their methyl esters, including beta-L-Asp-L-Phe, beta-L-Asp-L-Phe methyl ester (aspartame), beta-L-Asp-L-Ala, beta-L-Asp-L-Leu and beta-L-Asp-L-Lys. Does not have aspartylglucosaminidase activity and is inactive toward GlcNAc-L-Asn. Likewise, has no activity toward glutamine. The chain is Isoaspartyl peptidase/L-asparaginase (ASRGL1) from Bos taurus (Bovine).